The sequence spans 297 residues: 4-diphosphocytidyl-2-C-methyl-D-erythritol kinase (297 aa).

Residue K22 is part of the active site. Residue 111-121 (PSQAGMGGGSS) coordinates ATP. D153 is a catalytic residue.

Belongs to the GHMP kinase family. IspE subfamily.

The enzyme catalyses 4-CDP-2-C-methyl-D-erythritol + ATP = 4-CDP-2-C-methyl-D-erythritol 2-phosphate + ADP + H(+). It functions in the pathway isoprenoid biosynthesis; isopentenyl diphosphate biosynthesis via DXP pathway; isopentenyl diphosphate from 1-deoxy-D-xylulose 5-phosphate: step 3/6. Its function is as follows. Catalyzes the phosphorylation of the position 2 hydroxy group of 4-diphosphocytidyl-2C-methyl-D-erythritol. This Polaromonas naphthalenivorans (strain CJ2) protein is 4-diphosphocytidyl-2-C-methyl-D-erythritol kinase.